The primary structure comprises 86 residues: Photosystem I reaction center subunit PsaK (86 aa).

The chain crosses the membrane as a helical span at residues 15-34 (PWSTQVAMVMITCNLLAIVA).

It belongs to the PsaG/PsaK family.

The protein resides in the plastid. It localises to the chloroplast thylakoid membrane. In Pyropia yezoensis (Susabi-nori), this protein is Photosystem I reaction center subunit PsaK.